A 648-amino-acid polypeptide reads, in one-letter code: Serine/arginine repetitive matrix protein 3 (648 aa).

The disordered stretch occupies residues 1-44; it reads MSSTVNNGATGMPAPPDAANGFPQPGASSGSWPRAEEELRAAEP. The CWF21 domain maps to 55–98; the sequence is LDHERKRRVELKCMELQEMMEEQGYSEEEIRQKVGTFRQMLMEK. Basic and acidic residues predominate over residues 99–109; that stretch reads EGVLTREDRPG. 2 disordered regions span residues 99–139 and 154–648; these read EGVL…DGPV and YRTK…SGGF. 3 stretches are compositionally biased toward basic residues: residues 168-186, 199-211, and 219-243; these read PKKK…KKRR, LRKK…KHRR, and RRKR…RKRP. Composition is skewed to low complexity over residues 257–276 and 289–317; these read SASS…GSPS and TGSQ…NGGS. Over residues 381-409 the composition is skewed to basic residues; sequence ARRRRRRRRRRRSRSSANAPRRRGRRRTK. Low complexity-rich tracts occupy residues 414 to 428, 461 to 471, and 493 to 502; these read RGSS…SSSD, RPASTSPSPGT, and SWSSSRSPSK. Residues 525–544 are compositionally biased toward basic and acidic residues; it reads LGRDKDSEGRARHAEAEAAR. Positions 545 to 560 are enriched in basic residues; that stretch reads TRRRSRSYSPIRKRRR. A compositionally biased stretch (low complexity) spans 579–648; sequence IPYYRPSPSS…SRSSSESGGF (70 aa).

Belongs to the CWC21 family.

In terms of biological role, may play a role in regulating breast cancer cell invasiveness. May be involved in RYBP-mediated breast cancer progression. This is Serine/arginine repetitive matrix protein 3 (Srrm3) from Mus musculus (Mouse).